The chain runs to 333 residues: 4-hydroxy-3-methylbut-2-enyl diphosphate reductase (333 aa).

Cysteine 20 contacts [4Fe-4S] cluster. (2E)-4-hydroxy-3-methylbut-2-enyl diphosphate contacts are provided by histidine 49 and histidine 85. 2 residues coordinate dimethylallyl diphosphate: histidine 49 and histidine 85. Positions 49 and 85 each coordinate isopentenyl diphosphate. Cysteine 107 provides a ligand contact to [4Fe-4S] cluster. Histidine 135 is a binding site for (2E)-4-hydroxy-3-methylbut-2-enyl diphosphate. Dimethylallyl diphosphate is bound at residue histidine 135. Residue histidine 135 participates in isopentenyl diphosphate binding. Glutamate 137 (proton donor) is an active-site residue. Threonine 176 serves as a coordination point for (2E)-4-hydroxy-3-methylbut-2-enyl diphosphate. Residue cysteine 206 participates in [4Fe-4S] cluster binding. (2E)-4-hydroxy-3-methylbut-2-enyl diphosphate-binding residues include serine 234, serine 235, asparagine 236, and serine 279. Serine 234, serine 235, asparagine 236, and serine 279 together coordinate dimethylallyl diphosphate. Positions 234, 235, 236, and 279 each coordinate isopentenyl diphosphate.

It belongs to the IspH family. Requires [4Fe-4S] cluster as cofactor.

It catalyses the reaction isopentenyl diphosphate + 2 oxidized [2Fe-2S]-[ferredoxin] + H2O = (2E)-4-hydroxy-3-methylbut-2-enyl diphosphate + 2 reduced [2Fe-2S]-[ferredoxin] + 2 H(+). The enzyme catalyses dimethylallyl diphosphate + 2 oxidized [2Fe-2S]-[ferredoxin] + H2O = (2E)-4-hydroxy-3-methylbut-2-enyl diphosphate + 2 reduced [2Fe-2S]-[ferredoxin] + 2 H(+). It functions in the pathway isoprenoid biosynthesis; dimethylallyl diphosphate biosynthesis; dimethylallyl diphosphate from (2E)-4-hydroxy-3-methylbutenyl diphosphate: step 1/1. It participates in isoprenoid biosynthesis; isopentenyl diphosphate biosynthesis via DXP pathway; isopentenyl diphosphate from 1-deoxy-D-xylulose 5-phosphate: step 6/6. Its function is as follows. Catalyzes the conversion of 1-hydroxy-2-methyl-2-(E)-butenyl 4-diphosphate (HMBPP) into a mixture of isopentenyl diphosphate (IPP) and dimethylallyl diphosphate (DMAPP). Acts in the terminal step of the DOXP/MEP pathway for isoprenoid precursor biosynthesis. This chain is 4-hydroxy-3-methylbut-2-enyl diphosphate reductase, found in Rhizobium leguminosarum bv. trifolii (strain WSM2304).